The sequence spans 273 residues: N(omega)-hydroxy-L-arginine amidinohydrolase (273 aa).

5 residues coordinate Mn(2+): Asp-109, His-111, Asp-113, Asp-198, and Asp-200.

It belongs to the arginase family. Requires Mn(2+) as cofactor.

It catalyses the reaction N(omega)-hydroxy-L-arginine + H2O = hydroxyurea + L-ornithine. In terms of biological role, involved in the biosynthesis of the antibiotic D-cycloserine (DCS), a cyclic structural analog of D-alanine, used as an antitubercular agent. Catalyzes the hydrolysis of N(omega)-hydroxy-L-arginine (NHA) to yield hydroxyurea (HU) and L-ornithine. The protein is N(omega)-hydroxy-L-arginine amidinohydrolase of Streptomyces lavendulae.